The sequence spans 876 residues: MAIERYNPRDAEPRWQQKWNEDKVFVTDNSDPREKYYVLEMFPYPSGRIHMGHVRNYAMGDVVARYKRARGFNVLHPMGWDAFGMPAENAAMQNKVHPKDWTYQNIATMRGQLKSMGLSLDWTREFATCDVEYYHRQQALFVDFMEKGLVYRKQSKVNWDPVDHTVLANEQVIDGRGWRSGALVEQRELTQWFFRITDFSQDLLDELDELDQWPEKVRLMQKNWIGRSEGLSLRWQTVADTAPQGFSDITVYTTRPDTLFGASFLAIAADHPLAKELSATNPAIAEFCDECRRHGTSLAALETAEKKGIDTGVKVVHPLDPSWELPVYVANFVLMDYGTGAIFGCPSGDQRDLDFARKYGLPVVAVVAPEGPDAASFTVEDTAFTDDGVMINSSFLNGMKTTDAFEAVVQKLSAQSLGNAPQAERKVNFRLRDWGISRQRYWGCPIPVIHCEVCGVVPVPKKDLPVKLPDDVTFDVPGNPLDRHSTWRHVSCPQCGHDARRETDTMDTFVDSSWYYTRFTAPWEDEPTDPQVANHWLPVDQYIGGIEHAILHLLYSRFFTRAMRETGHVGVKEPFKGLFTQGMVVHETYSRGEGLTREWVPPAELRIEENDGTRRAFLLSSGEEVKIGSIEKMSKSKKNVVDPDDIIASYGADTARFFVLSDSPPDRDVIWSEAGVEGANRFVQRVWRIIGEAAEQLKGVKPKPATEGEGLAASKAAHKTLKAVQEDLDKLAFNKAIARIYELVNALAGPLADVAAGGKPDNVKAAARDAVEILIRIIAPMTPHLAEECWSALGNEGLVAETPWPTFVASLVEENDVVMPVQVNGKKRGELTIARDADQDAVRTAALELDAVKSILAGGEPKKVIVVPQRIVNIVV.

The 'HIGH' region motif lies at 43–53 (PYPSGRIHMGH). The 'KMSKS' region motif lies at 632 to 636 (KMSKS). Lys-635 serves as a coordination point for ATP.

Belongs to the class-I aminoacyl-tRNA synthetase family.

It is found in the cytoplasm. It catalyses the reaction tRNA(Leu) + L-leucine + ATP = L-leucyl-tRNA(Leu) + AMP + diphosphate. The polypeptide is Leucine--tRNA ligase (Agrobacterium fabrum (strain C58 / ATCC 33970) (Agrobacterium tumefaciens (strain C58))).